Consider the following 301-residue polypeptide: Mitochondrial carnitine/acylcarnitine carrier protein (301 aa).

At A2 the chain carries N-acetylalanine. Residues 2–12 lie on the Cytoplasmic side of the membrane; sequence AEEPKPISPLK. Solcar repeat units follow at residues 8 to 99, 108 to 196, and 207 to 293; these read ISPL…GKRL, LTYP…LKNL, and LSVP…PMKI. The helical transmembrane segment at 13 to 31 threads the bilayer; that stretch reads NLLAGGFGGVCLVFVGHPL. Topologically, residues 32–73 are mitochondrial matrix; it reads DTVKVRLQTQPPSLPGQPPMYSGTIDCFRKTLFREGITGLYR. The helical transmembrane segment at 74–93 threads the bilayer; it reads GMAAPIIGVTPMFAVCFFGF. Over 94-112 the chain is Cytoplasmic; that stretch reads GLGKRLQQKSPEDELTYPQ. A helical membrane pass occupies residues 113–131; that stretch reads LFTAGMLSGVFTTGIMTPG. The Mitochondrial matrix portion of the chain corresponds to 132-170; that stretch reads ERIKCLLQIQASSGKNKYSGTLDCAKKLYQEFGIRGFYK. An N6-acetyllysine mark is found at K148 and K157. N6-acetyllysine; alternate is present on K170. K170 is subject to N6-succinyllysine; alternate. The chain crosses the membrane as a helical span at residues 171–190; it reads GTALTLMRDVPASGMYFMTY. Residues 191–211 are Cytoplasmic-facing; the sequence is EWLKNLFTPQGKSVHDLSVPR. The helical transmembrane segment at 212–230 threads the bilayer; that stretch reads VLVAGGFRGIFNWVVAIPP. The Mitochondrial matrix segment spans residues 231 to 267; sequence DVLKSRFQTAPPGKYPNGFRDVLRELIREEGVTSLYK. The chain crosses the membrane as a helical span at residues 268 to 287; that stretch reads GFNAVMIRAFPANAACFLGF. Residues 288-301 are Cytoplasmic-facing; it reads EIPMKILNWIAPNL.

The protein belongs to the mitochondrial carrier (TC 2.A.29) family. Post-translationally, the N-terminus is blocked.

The protein localises to the mitochondrion inner membrane. The catalysed reaction is O-acetyl-(R)-carnitine(in) + (R)-carnitine(out) = O-acetyl-(R)-carnitine(out) + (R)-carnitine(in). The enzyme catalyses an O-acyl-(R)-carnitine(in) + (R)-carnitine(out) = an O-acyl-(R)-carnitine(out) + (R)-carnitine(in). It carries out the reaction O-propanoyl-(R)-carnitine(in) + (R)-carnitine(out) = O-propanoyl-(R)-carnitine(out) + (R)-carnitine(in). It catalyses the reaction O-hexadecanoyl-(R)-carnitine(in) + (R)-carnitine(out) = O-hexadecanoyl-(R)-carnitine(out) + (R)-carnitine(in). The catalysed reaction is O-octanoyl-(R)-carnitine(in) + (R)-carnitine(out) = O-octanoyl-(R)-carnitine(out) + (R)-carnitine(in). The enzyme catalyses (R)-carnitine(in) = (R)-carnitine(out). In terms of biological role, mediates the electroneutral exchange of acylcarnitines (O-acyl-(R)-carnitine or L-acylcarnitine) of different acyl chain lengths (ranging from O-acetyl-(R)-carnitine to long-chain O-acyl-(R)-carnitines) with free carnitine ((R)-carnitine or L-carnitine) across the mitochondrial inner membrane, via a ping-pong mechanism. Key player in the mitochondrial oxidation pathway, it translocates the fatty acids in the form of acylcarnitines into the mitochondrial matrix, where the carnitine palmitoyltransferase 2 (CPT-2) activates them to undergo fatty acid beta-oxidation. Catalyzes the unidirectional transport (uniport) of carnitine at lower rates than the antiport (exchange). The protein is Mitochondrial carnitine/acylcarnitine carrier protein of Rattus norvegicus (Rat).